Here is a 233-residue protein sequence, read N- to C-terminus: 7-cyano-7-deazaguanine synthase (233 aa).

8–18 (LSGGLDSTTCM) contacts ATP. 4 residues coordinate Zn(2+): Cys186, Cys194, Cys197, and Cys200.

It belongs to the QueC family. In terms of assembly, homodimer. Zn(2+) serves as cofactor.

The enzyme catalyses 7-carboxy-7-deazaguanine + NH4(+) + ATP = 7-cyano-7-deazaguanine + ADP + phosphate + H2O + H(+). It participates in purine metabolism; 7-cyano-7-deazaguanine biosynthesis. Its function is as follows. Catalyzes the ATP-dependent conversion of 7-carboxy-7-deazaguanine (CDG) to 7-cyano-7-deazaguanine (preQ(0)). In Desulfitobacterium hafniense (strain DSM 10664 / DCB-2), this protein is 7-cyano-7-deazaguanine synthase.